Here is a 393-residue protein sequence, read N- to C-terminus: S-adenosylmethionine synthase 2 (393 aa).

A Mg(2+)-binding site is contributed by E9. ATP is bound at residue H15. K(+) is bound at residue E43. L-methionine-binding residues include E56 and Q99. Residues 167 to 169, 235 to 238, D246, 252 to 253, A269, K273, and K277 contribute to the ATP site; these read DGK, SGRF, and RK. D246 is a binding site for L-methionine. L-methionine is bound at residue K277.

This sequence belongs to the AdoMet synthase family. In terms of assembly, homotetramer. Interacts with GRF3. Mn(2+) serves as cofactor. Requires Mg(2+) as cofactor. The cofactor is Co(2+). It depends on K(+) as a cofactor. Highly expressed in stems and roots. Detected in trichomes (at the protein level).

The protein resides in the cytoplasm. The catalysed reaction is L-methionine + ATP + H2O = S-adenosyl-L-methionine + phosphate + diphosphate. Its pathway is amino-acid biosynthesis; S-adenosyl-L-methionine biosynthesis; S-adenosyl-L-methionine from L-methionine: step 1/1. Its activity is regulated as follows. Inhibited by 5,5'-dithiobis-2-nitrobenzoic acid (DTNB) and N-ethylmaleimide (NEM) (in vitro). Its function is as follows. Catalyzes the formation of S-adenosylmethionine from methionine and ATP. The reaction comprises two steps that are both catalyzed by the same enzyme: formation of S-adenosylmethionine (AdoMet) and triphosphate, and subsequent hydrolysis of the triphosphate. This chain is S-adenosylmethionine synthase 2 (SAM2), found in Arabidopsis thaliana (Mouse-ear cress).